We begin with the raw amino-acid sequence, 362 residues long: Diphosphomevalonate decarboxylase (362 aa).

Residues Tyr17 to Lys20, Arg72, Ser150 to Arg155, and Thr206 each bind (R)-5-diphosphomevalonate.

This sequence belongs to the diphosphomevalonate decarboxylase family. Homodimer.

It catalyses the reaction (R)-5-diphosphomevalonate + ATP = isopentenyl diphosphate + ADP + phosphate + CO2. It functions in the pathway isoprenoid biosynthesis; isopentenyl diphosphate biosynthesis via mevalonate pathway; isopentenyl diphosphate from (R)-mevalonate: step 3/3. Diphosphomevalonate decarboxylase; part of the second module of ergosterol biosynthesis pathway that includes the middle steps of the pathway. MVD1 converts diphosphomevalonate into isopentenyl diphosphate. The second module is carried out in the vacuole and involves the formation of farnesyl diphosphate, which is also an important intermediate in the biosynthesis of ubiquinone, dolichol, heme and prenylated proteins. Activity by the mevalonate kinase ERG12 first converts mevalonate into 5-phosphomevalonate. 5-phosphomevalonate is then further converted to 5-diphosphomevalonate by the phosphomevalonate kinase ERG8. The diphosphomevalonate decarboxylase MVD then produces isopentenyl diphosphate. The isopentenyl-diphosphate delta-isomerase IDI1 then catalyzes the 1,3-allylic rearrangement of the homoallylic substrate isopentenyl (IPP) to its highly electrophilic allylic isomer, dimethylallyl diphosphate (DMAPP). Finally the farnesyl diphosphate synthase ERG20 catalyzes the sequential condensation of isopentenyl pyrophosphate with dimethylallyl pyrophosphate, and then with the resultant geranylpyrophosphate to the ultimate product farnesyl pyrophosphate. This chain is Diphosphomevalonate decarboxylase, found in Candida albicans (strain SC5314 / ATCC MYA-2876) (Yeast).